A 173-amino-acid chain; its full sequence is Probable calcium-binding protein CML14 (173 aa).

EF-hand domains are found at residues 21-56 (SQLK…LGLR), 57-92 (PTGD…VLTT), 97-132 (VDQA…LGQP), and 133-168 (LTFE…SALD). Ca(2+)-binding residues include Asp-34, Asn-36, Asp-38, Ser-40, Glu-45, Asp-70, Asn-72, Asn-74, Ser-76, Glu-81, Asp-110, Asp-112, Asn-114, Glu-121, Asp-146, Asp-148, Asp-150, and Glu-157.

Potential calcium sensor. The sequence is that of Probable calcium-binding protein CML14 (CML14) from Oryza sativa subsp. japonica (Rice).